We begin with the raw amino-acid sequence, 243 residues long: CR(VI) reductase (243 aa).

Belongs to the flavin oxidoreductase frp family. It depends on FMN as a cofactor.

The sequence is that of CR(VI) reductase (chrR) from Pseudomonas sp. (strain G-1).